The chain runs to 187 residues: Putative manganese efflux pump MntP (187 aa).

A run of 6 helical transmembrane segments spans residues 8–28, 39–59, 65–85, 106–126, 131–151, and 166–186; these read FLSIGLAIDAFAVSLSSGFII, IALFFGIFQGVMPLIGWLTGL, LANFDHWIAFILLAAIGGKMI, LFALAIATSIDALAAGLGLSV, ILLACTLIASITFSLSFIGVF, and ILGGITLIGIGTKILVEGLII.

This sequence belongs to the MntP (TC 9.B.29) family.

Its subcellular location is the cell inner membrane. Probably functions as a manganese efflux pump. This chain is Putative manganese efflux pump MntP, found in Rippkaea orientalis (strain PCC 8801 / RF-1) (Cyanothece sp. (strain PCC 8801)).